A 1414-amino-acid polypeptide reads, in one-letter code: DNA-directed RNA polymerase subunit beta' (1414 aa).

Zn(2+) contacts are provided by Cys-72, Cys-74, Cys-87, and Cys-90. Residues Asp-463, Asp-465, and Asp-467 each contribute to the Mg(2+) site. 4 residues coordinate Zn(2+): Cys-811, Cys-885, Cys-892, and Cys-895.

The protein belongs to the RNA polymerase beta' chain family. The RNAP catalytic core consists of 2 alpha, 1 beta, 1 beta' and 1 omega subunit. When a sigma factor is associated with the core the holoenzyme is formed, which can initiate transcription. The cofactor is Mg(2+). Zn(2+) is required as a cofactor.

The catalysed reaction is RNA(n) + a ribonucleoside 5'-triphosphate = RNA(n+1) + diphosphate. DNA-dependent RNA polymerase catalyzes the transcription of DNA into RNA using the four ribonucleoside triphosphates as substrates. The polypeptide is DNA-directed RNA polymerase subunit beta' (Roseobacter denitrificans (strain ATCC 33942 / OCh 114) (Erythrobacter sp. (strain OCh 114))).